Reading from the N-terminus, the 705-residue chain is MARTTPIERYRNFGIMAHIDAGKTTTSERILFYTGVSHKIGEVHDGAAVMDWMEQEQERGITITSAATTAFWSGMDKSMPQHRFNIIDTPGHVDFTIEVERSLRVLDGAVFVLCAVGGVQPQSETVWRQANKYSVPRMAFVNKMDRTGANFDKVVEQLKARLGAYAVPMQVPIGAEDGFEGVVDLLKMKAIHWDTASQGTTFEYRDIPADLVDVATEARSFMVEAAAEASEDLMDKYLNEGDLSEQEILSGLRERTLKVEIVPVFCGSAFKNKGVQAMLDGVVHLLPSPADRPPVQGIDEDEKEDTRAATDTAPFSALAFKIMTDPFVGSLTFFRVYSGTLNSGDQVYNPVKSKKERVGRILQMHSNNREEIKEVRAGDIAAAVGLKDVTTGDTLCAQDKIITLERMVFPEPVISMAVEPKTKSDQEKMGMALGRLAQEDPSFRVKTDEESGQTIISGMGELHLDIIVDRMRREFNVEANVGKPQVAYRETIRKSDVKSDYKHAKQSGGKGQYGHVVIELSPMTEEERKSENVKDDFLFINDITGGIIPKEFIPSVEKGLRETITSGPIAGFPVVGVKVKLVFGSYHDVDSSEMAFKLAASMAFKQGFAKASPVLLEPIMKVEIVSPEDYLGDVMGDVSRRRGVLQGQDDSPSGKIINAMIPLGEMFGYATSLRSMSQGRATFSMEFDHYEEAPANIADAVTKKG.

The region spanning 8–290 (ERYRNFGIMA…GVVHLLPSPA (283 aa)) is the tr-type G domain. Residues 17 to 24 (AHIDAGKT), 88 to 92 (DTPGH), and 142 to 145 (NKMD) contribute to the GTP site. Residues 290–309 (ADRPPVQGIDEDEKEDTRAA) are disordered.

Belongs to the TRAFAC class translation factor GTPase superfamily. Classic translation factor GTPase family. EF-G/EF-2 subfamily.

It is found in the cytoplasm. In terms of biological role, catalyzes the GTP-dependent ribosomal translocation step during translation elongation. During this step, the ribosome changes from the pre-translocational (PRE) to the post-translocational (POST) state as the newly formed A-site-bound peptidyl-tRNA and P-site-bound deacylated tRNA move to the P and E sites, respectively. Catalyzes the coordinated movement of the two tRNA molecules, the mRNA and conformational changes in the ribosome. This is Elongation factor G from Xanthomonas euvesicatoria pv. vesicatoria (strain 85-10) (Xanthomonas campestris pv. vesicatoria).